The chain runs to 145 residues: D-aminoacyl-tRNA deacylase (145 aa).

Residues 137 to 138 (GP) carry the Gly-cisPro motif, important for rejection of L-amino acids motif.

It belongs to the DTD family. As to quaternary structure, homodimer.

The protein resides in the cytoplasm. The catalysed reaction is glycyl-tRNA(Ala) + H2O = tRNA(Ala) + glycine + H(+). It catalyses the reaction a D-aminoacyl-tRNA + H2O = a tRNA + a D-alpha-amino acid + H(+). In terms of biological role, an aminoacyl-tRNA editing enzyme that deacylates mischarged D-aminoacyl-tRNAs. Also deacylates mischarged glycyl-tRNA(Ala), protecting cells against glycine mischarging by AlaRS. Acts via tRNA-based rather than protein-based catalysis; rejects L-amino acids rather than detecting D-amino acids in the active site. By recycling D-aminoacyl-tRNA to D-amino acids and free tRNA molecules, this enzyme counteracts the toxicity associated with the formation of D-aminoacyl-tRNA entities in vivo and helps enforce protein L-homochirality. The polypeptide is D-aminoacyl-tRNA deacylase (Lactobacillus delbrueckii subsp. bulgaricus (strain ATCC BAA-365 / Lb-18)).